Here is a 43-residue protein sequence, read N- to C-terminus: DRDSCVDKSKCAKYGYYGQCDECCKKAGDRAGNCVYLKCKCNQ.

Intrachain disulfides connect C5–C23, C11–C34, C20–C39, and C24–C41.

It belongs to the ergtoxin family. Gamma-KTx 4 subfamily. Expressed by the venom gland.

The protein localises to the secreted. Reversibly blocks Kv11/ERG potassium channels. This chain is Potassium channel toxin gamma-KTx 4.7, found in Centruroides limpidus (Mexican scorpion).